A 309-amino-acid chain; its full sequence is 15-cis-phytoene synthase (309 aa).

Positions leucine 290–leucine 309 are disordered.

This sequence belongs to the phytoene/squalene synthase family. ATP serves as cofactor. Mn(2+) is required as a cofactor. The cofactor is Mg(2+).

It carries out the reaction 2 (2E,6E,10E)-geranylgeranyl diphosphate = 15-cis-phytoene + 2 diphosphate. It participates in carotenoid biosynthesis; phytoene biosynthesis. Its activity is regulated as follows. Inhibited by phosphate ions and squalestatin. Its function is as follows. Involved in the biosynthesis of carotenoids. Catalyzes the condensation of two molecules of geranylgeranyl diphosphate (GGPP) to give prephytoene diphosphate (PPPP) and the subsequent rearrangement of the cyclopropylcarbinyl intermediate to yield the 15-cis-phytoene isomer. This Pantoea ananas (Erwinia uredovora) protein is 15-cis-phytoene synthase (crtB).